The primary structure comprises 86 residues: Small ribosomal subunit protein bS20 (86 aa).

The disordered stretch occupies residues 1–27; the sequence is MANNKSAKKRAIQAEKRRQHNASRRSM.

This sequence belongs to the bacterial ribosomal protein bS20 family.

Its function is as follows. Binds directly to 16S ribosomal RNA. This chain is Small ribosomal subunit protein bS20, found in Vibrio cholerae serotype O1 (strain ATCC 39541 / Classical Ogawa 395 / O395).